We begin with the raw amino-acid sequence, 305 residues long: tRNA pseudouridine synthase B (305 aa).

Catalysis depends on Asp39, which acts as the Nucleophile.

It belongs to the pseudouridine synthase TruB family. Type 1 subfamily.

The enzyme catalyses uridine(55) in tRNA = pseudouridine(55) in tRNA. Responsible for synthesis of pseudouridine from uracil-55 in the psi GC loop of transfer RNAs. The polypeptide is tRNA pseudouridine synthase B (Staphylococcus aureus (strain MSSA476)).